The chain runs to 356 residues: tRNA-specific 2-thiouridylase MnmA 1 (356 aa).

ATP contacts are provided by residues 8–15 (GMSGGVDS) and Met-34. The active-site Nucleophile is Cys-103. Cys-103 and Cys-199 are oxidised to a cystine. An ATP-binding site is contributed by Gly-127. Residues 149 to 151 (KDQ) are interaction with tRNA. The Cysteine persulfide intermediate role is filled by Cys-199. An interaction with tRNA region spans residues 305–306 (RY).

The protein belongs to the MnmA/TRMU family.

The protein localises to the cytoplasm. It catalyses the reaction S-sulfanyl-L-cysteinyl-[protein] + uridine(34) in tRNA + AH2 + ATP = 2-thiouridine(34) in tRNA + L-cysteinyl-[protein] + A + AMP + diphosphate + H(+). Functionally, catalyzes the 2-thiolation of uridine at the wobble position (U34) of tRNA, leading to the formation of s(2)U34. The polypeptide is tRNA-specific 2-thiouridylase MnmA 1 (Clostridium botulinum (strain Langeland / NCTC 10281 / Type F)).